We begin with the raw amino-acid sequence, 320 residues long: ATP-dependent 6-phosphofructokinase (320 aa).

Glycine 11 provides a ligand contact to ATP. Position 21–25 (21–25 (RAVVR)) interacts with ADP. Residues 72 to 73 (RY) and 102 to 105 (GDGS) contribute to the ATP site. Aspartate 103 contributes to the Mg(2+) binding site. 125–127 (TID) contacts substrate. Aspartate 127 functions as the Proton acceptor in the catalytic mechanism. An ADP-binding site is contributed by arginine 154. Substrate is bound by residues arginine 162 and 169-171 (MGR). ADP is bound by residues 185-187 (GAD), arginine 211, and 213-215 (KKH). Residues glutamate 222, arginine 243, and 249 to 252 (HVVR) each bind substrate.

This sequence belongs to the phosphofructokinase type A (PFKA) family. ATP-dependent PFK group I subfamily. Prokaryotic clade 'B1' sub-subfamily. In terms of assembly, homotetramer. Requires Mg(2+) as cofactor.

It is found in the cytoplasm. The catalysed reaction is beta-D-fructose 6-phosphate + ATP = beta-D-fructose 1,6-bisphosphate + ADP + H(+). Its pathway is carbohydrate degradation; glycolysis; D-glyceraldehyde 3-phosphate and glycerone phosphate from D-glucose: step 3/4. With respect to regulation, allosterically activated by ADP and other diphosphonucleosides, and allosterically inhibited by phosphoenolpyruvate. Catalyzes the phosphorylation of D-fructose 6-phosphate to fructose 1,6-bisphosphate by ATP, the first committing step of glycolysis. The protein is ATP-dependent 6-phosphofructokinase of Enterococcus faecalis (strain ATCC 700802 / V583).